The chain runs to 162 residues: Large ribosomal subunit protein uL15 (162 aa).

A compositionally biased stretch (basic and acidic residues) spans 1–10; it reads MNLNELRDNA. Residues 1 to 39 are disordered; the sequence is MNLNELRDNAGSRYRKKRLGRGIGSGKGKTSGKGVKGQK. The span at 21–35 shows a compositional bias: gly residues; it reads RGIGSGKGKTSGKGV.

The protein belongs to the universal ribosomal protein uL15 family. In terms of assembly, part of the 50S ribosomal subunit.

Its function is as follows. Binds to the 23S rRNA. This chain is Large ribosomal subunit protein uL15, found in Gluconacetobacter diazotrophicus (strain ATCC 49037 / DSM 5601 / CCUG 37298 / CIP 103539 / LMG 7603 / PAl5).